The following is a 175-amino-acid chain: Adenine phosphoribosyltransferase (175 aa).

The protein belongs to the purine/pyrimidine phosphoribosyltransferase family. As to quaternary structure, homodimer.

The protein localises to the cytoplasm. It catalyses the reaction AMP + diphosphate = 5-phospho-alpha-D-ribose 1-diphosphate + adenine. It participates in purine metabolism; AMP biosynthesis via salvage pathway; AMP from adenine: step 1/1. Catalyzes a salvage reaction resulting in the formation of AMP, that is energically less costly than de novo synthesis. This is Adenine phosphoribosyltransferase from Thermosipho melanesiensis (strain DSM 12029 / CIP 104789 / BI429).